The sequence spans 278 residues: MSSYISLLKPRVIWLLILASVAGYIYGGGGVDSRLFSLLAVAFLSTGGSAAFNHYWERDIDALMTRTFKRPLPSGLITPNAALAYSLALSATGISLGFLLLGLLPGLFVLLGWLFYAVVYTIVLKRRTWLNIFGGGFAGNAVFLGGYALAKGTVDLPAVLISFAIYLWIPSHIWALAFKYRGDYKRAGVPMLPALIKEERAVAVISAINAAAAAYILWLYLQFGGGAGGALVALGVAATIATSIYAAVKKTEEAMWKMYKASSPILALFLIALILSRL.

9 consecutive transmembrane segments (helical) span residues 12–32 (VIWLLILASVAGYIYGGGGVD), 35–55 (LFSLLAVAFLSTGGSAAFNHY), 76–96 (LITPNAALAYSLALSATGISL), 98–118 (FLLLGLLPGLFVLLGWLFYAV), 129–149 (WLNIFGGGFAGNAVFLGGYAL), 158–178 (AVLISFAIYLWIPSHIWALAF), 199–221 (ERAVAVISAINAAAAAYILWLYL), 226–248 (GAGGALVALGVAATIATSIYAAV), and 255–275 (MWKMYKASSPILALFLIALIL).

The protein belongs to the UbiA prenyltransferase family. Protoheme IX farnesyltransferase subfamily.

It is found in the cell membrane. It carries out the reaction heme b + (2E,6E)-farnesyl diphosphate + H2O = Fe(II)-heme o + diphosphate. It participates in porphyrin-containing compound metabolism; heme O biosynthesis; heme O from protoheme: step 1/1. Converts heme B (protoheme IX) to heme O by substitution of the vinyl group on carbon 2 of heme B porphyrin ring with a hydroxyethyl farnesyl side group. The sequence is that of Protoheme IX farnesyltransferase 1 from Pyrobaculum aerophilum (strain ATCC 51768 / DSM 7523 / JCM 9630 / CIP 104966 / NBRC 100827 / IM2).